The sequence spans 499 residues: Endosomal/lysosomal proton channel TMEM175 (499 aa).

The Cytoplasmic portion of the chain corresponds to 1–30 (MSRLQTEEQAVDSEGDSSLHRRNEEGTQSS). Positions 1 to 30 (MSRLQTEEQAVDSEGDSSLHRRNEEGTQSS) are disordered. At threonine 6 the chain carries Phosphothreonine. The helical transmembrane segment at 31–53 (HRMLGFSDALLSIIATVMILPVT) threads the bilayer. Positions 32–38 (RMLGFSD) match the RxxxFSD motif 1 motif. Topologically, residues 54 to 74 (HTEISPEQQFDKSIQKLLATR) are lumenal. Residues 55–60 (TEISPE) form a short helix H1-1 region. The interval 62 to 68 (QFDKSIQ) is short helix H2-1. A helical membrane pass occupies residues 75-97 (IAVYLMTFLIVTVAWTAHTRLFQ). The Cytoplasmic segment spans residues 98-103 (VVGKID). Residues 104-125 (DTLALLNLACMMTITLLPYTFS) traverse the membrane as a helical segment. The Lumenal segment spans residues 126–135 (LMVTFPDVPL). A helical membrane pass occupies residues 136 to 157 (GIFLFCVCVIAIGSVQAMIVGY). Residues 158-181 (AFHFPHLLNPQIQCSTHRDLSRRH) are Cytoplasmic-facing. The chain crosses the membrane as a helical span at residues 182 to 202 (ILHLVLRGPALCFVAAVFSLF). Over 203-207 (FFPLS) the chain is Lumenal. Residues 208–227 (YLLMVTVIFLPHISKATTWC) traverse the membrane as a helical segment. At 228–254 (KDKLMGQRESPAHDMEPFSIDLHAPLS) the chain is on the cytoplasmic side. Residues 255-279 (KERVEAFSDGVYAIVATLLILDICE) traverse the membrane as a helical segment. The short motif at 257–263 (RVEAFSD) is the RxxxFSD motif 2 element. Residues 280–306 (DNVPDPKDVQEKFSGSLVAALGAYGPQ) lie on the Lumenal side of the membrane. The short helix H1-2 stretch occupies residues 285-293 (PKDVQEKFS). The short helix H2-2 stretch occupies residues 295-301 (SLVAALG). A helical transmembrane segment spans residues 307-329 (FLAYFGSFATVGLLWFAHHSLFL). Over 330-335 (HVRKAT) the chain is Cytoplasmic. Residues 336–357 (QTMGLLNILSLAFVGGLPLAYQ) form a helical membrane-spanning segment. At 358-372 (QTSAFARQPHDELER) the chain is on the lumenal side. A helical membrane pass occupies residues 373 to 393 (VRVSCAIIFFASIFQFAIWTT). Residues 394 to 413 (ALLHQTETLQPAVQFGGQEH) lie on the Cytoplasmic side of the membrane. A helical membrane pass occupies residues 414-437 (AFMFAKLALYPCASLLAFAATCLL). Residues 438–439 (SR) lie on the Lumenal side of the membrane. A helical membrane pass occupies residues 440–466 (FSTAIFHLMQISVPFAFLLLRLLVRLA). Topologically, residues 467–499 (LAGLQVLRGLWPHHPQQDQSEPEAQSQLLPDPC) are cytoplasmic.

This sequence belongs to the TMEM175 family. Homodimer. Interacts with AKT (AKT1, AKT2 or AKT3); leading to formation of the lysoK(GF) complex, which activates the channel. Interacts with LAMP1; inhibiting the proton channel activity of TMEM175. Interacts with LAMP2; inhibiting the proton channel activity of TMEM175.

The protein localises to the endosome membrane. It is found in the lysosome membrane. It catalyses the reaction H(+)(in) = H(+)(out). It carries out the reaction K(+)(in) = K(+)(out). Active at low pH (under pH 4.6): proton channel activity is activated by luminal side protons. Polyunsaturated fatty acids, such as arachidonic acid, also activate the channel activity. Proton channel activity is directly inhibited by LAMP1 or LAMP2, facilitating lysosomal acidification. Channel activity is activated following interaction with AKT (AKT1, AKT2 or AKT3): interaction promotes activation from closed to an open state. Activation by AKT is independent of AKT serine/threonine-protein kinase activity. Proton-activated proton channel that catalyzes proton efflux from endosomes and lysosomes to maintain a steady-state pH. Activated at low pH (under pH 4.6) by luminal side protons: selectively mediates lysosomal proton release from lysosomes, eliciting a proton leak that balances V-ATPase activity to maintain pH homeostasis. Regulation of lumenal pH stability is required for autophagosome-lysosome fusion. Also acts as a potassium channel at higher pH, regulating potassium conductance in endosomes and lysosomes. Constitutes the pore-forming subunit of the lysoK(GF) complex, a complex activated by extracellular growth factors. The lysoK(GF) complex is composed of TMEM175 and AKT (AKT1, AKT2 or AKT3), a major target of growth factor receptors: in the complex, TMEM175 channel is opened by conformational changes by AKT, leading to its activation. The lysoK(GF) complex is required to protect neurons against stress-induced damage. This is Endosomal/lysosomal proton channel TMEM175 from Mus musculus (Mouse).